Here is a 462-residue protein sequence, read N- to C-terminus: Microspherule protein 1 (462 aa).

Methionine 1 bears the N-acetylmethionine mark. The interval 1 to 130 (MDKDSQGLLD…KSKQPLQVTK (130 aa)) is disordered. Residue serine 22 is modified to Phosphoserine. A compositionally biased stretch (basic residues) spans 43-55 (PKRRSSSRFIKRK). The segment covering 81–90 (SGRCSGSEPS) has biased composition (low complexity). Position 102 is a phosphoserine (serine 102). Position 103 is a phosphothreonine (threonine 103). Positions 103–112 (TPVPPSPAPT) are enriched in pro residues. Serine 108 bears the Phosphoserine mark. Residues 113–123 (PGLTKRVKKSK) carry the Nuclear localization signal motif. N6-acetyllysine occurs at positions 123 and 130. Serine 282 bears the Phosphoserine mark. Positions 301-335 (LEHELTVADRRQKREIRQLEQELHKWQVLVDSITG) form a coiled coil. Residues 363-419 (ITLGRATKDNQIDVDLSLEGPAWKISRKQGVIKLKNNGDFFIANEGRRPIYIDGRPV) form the FHA domain. The UBR5-degron signature appears at 389–396 (RKQGVIKL).

In terms of assembly, component of the chromatin remodeling INO80 complex; specifically part of a complex module associated with the N-terminus of INO80. Component of some MLL1/MLL complex, at least composed of the core components KMT2A/MLL1, ASH2L, HCFC1, WDR5 and RBBP5, as well as the facultative components BACC1, CHD8, E2F6, HSP70, INO80C, KANSL1, LAS1L, MAX, MCRS1, MGA, KAT8/MOF, PELP1, PHF20, PRP31, RING2, RUVB1/TIP49A, RUVB2/TIP49B, SENP3, TAF1, TAF4, TAF6, TAF7, TAF9 and TEX10. Component of the NSL complex at least composed of MOF/KAT8, KANSL1, KANSL2, KANSL3, MCRS1, PHF20, OGT1/OGT, WDR5 and HCFC1. Interacts with NOP2. Interacts with PINX1. Interacts with TERT. Interacts with CCDC85B. Interacts with DAXX. Interacts (via N-terminus) with FMR1 (via phosphorylated form). Interacts with FXR1 and FXR2. Interacts (via C-terminus) with NDE1 (via C-terminus); phosphorylation of NDE1 inhibits the interaction. Interacts (via C-terminus) with ZNF375. Interacts (via C-terminus) with active GTP-bound RHEB (via N-terminus) under conditions of high amino acid concentration; the interaction promotes mTORC1 complex activation by RHEB. Interacts (via N-terminus) with the mTORC1 complex; the interaction ensures mTORC1 activation by RHEB. Interacts with DYNC1I1; the interaction is required for the proper distribution of centriolar satellites. Interacts with TTBK2; the interaction is required for recruitment of TTBK2 to the mother centriole. Interacts with KIF2A; the interaction occurs during mitosis and facilitates chromosome alignment. Ubiquitinated by UBR5 when not assembled in the INO80 complex, leading to its degradation: UBR5 recognizes and binds a degron that is not accessible when MCRS1 is part of the INO80 complex. In terms of processing, phosphorylated by AURKA on Ser-35 and/or Ser-36 during mitosis which is required for kinetochore fiber assembly and mitotic progression but not for spindle localization or for chromosome-induced microtuble aster formation. Also phosphorylated by AURKA on Ser-85 and/or Ser-87. Phosphorylated by TTK/MPS1 which enhances recruitment of KIF2A to the minus end of spindle microtubules and facilitates precise chromosome segregation.

The protein localises to the nucleus. Its subcellular location is the nucleolus. It localises to the cytoplasm. The protein resides in the cytoskeleton. It is found in the microtubule organizing center. The protein localises to the centrosome. Its subcellular location is the spindle pole. It localises to the chromosome. The protein resides in the centromere. It is found in the kinetochore. The protein localises to the lysosome. Its subcellular location is the centriolar satellite. Functionally, modulates the transcription repressor activity of DAXX by recruiting it to the nucleolus. As part of the NSL complex it may be involved in acetylation of nucleosomal histone H4 on several lysine residues. Putative regulatory component of the chromatin remodeling INO80 complex which is involved in transcriptional regulation, DNA replication and probably DNA repair. May also be an inhibitor of TERT telomerase activity. Binds to G-quadruplex structures in mRNA. Binds to RNA homomer poly(G) and poly(U). Maintains RHEB at the lysosome in its active GTP-bound form and prevents its interaction with the mTORC1 complex inhibitor TSC2, ensuring activation of the mTORC1 complex by RHEB. Stabilizes the minus ends of kinetochore fibers by protecting them from depolymerization, ensuring functional spindle assembly during mitosis. Following phosphorylation by TTK/MPS1, enhances recruitment of KIF2A to the minus ends of mitotic spindle microtubules which promotes chromosome alignment. Regulates the morphology of microtubule minus ends in mitotic spindle by maintaining them in a closed conformation characterized by the presence of an electron-dense cap. Regulates G2/M transition and spindle assembly during oocyte meiosis. Mediates histone modifications and transcriptional regulation in germinal vesicle oocytes which are required for meiotic progression. Also regulates microtubule nucleation and spindle assembly by activating aurora kinases during oocyte meiosis. Contributes to the establishment of centriolar satellites and also plays a role in primary cilium formation by recruiting TTBK2 to the mother centriole which is necessary for removal of the CP110 cap from the mother centriole, an early step in ciliogenesis. Required for epiblast development during early embryogenesis. Essential for cell viability. The protein is Microspherule protein 1 (Mcrs1) of Mus musculus (Mouse).